A 189-amino-acid polypeptide reads, in one-letter code: Tetratricopeptide repeat protein 36 (189 aa).

TPR repeat units follow at residues 51–84, 86–118, and 123–156; these read SKAL…LPER, SAYN…SGGR, and RQSF…GSPF.

This sequence belongs to the TTC36 family.

The sequence is that of Tetratricopeptide repeat protein 36 (TTC36) from Homo sapiens (Human).